The following is a 260-amino-acid chain: tRNA1(Val) (adenine(37)-N6)-methyltransferase (260 aa).

The protein belongs to the methyltransferase superfamily. tRNA (adenine-N(6)-)-methyltransferase family.

Its subcellular location is the cytoplasm. It catalyses the reaction adenosine(37) in tRNA1(Val) + S-adenosyl-L-methionine = N(6)-methyladenosine(37) in tRNA1(Val) + S-adenosyl-L-homocysteine + H(+). Its function is as follows. Specifically methylates the adenine in position 37 of tRNA(1)(Val) (anticodon cmo5UAC). The polypeptide is tRNA1(Val) (adenine(37)-N6)-methyltransferase (Serratia proteamaculans (strain 568)).